The chain runs to 125 residues: Calcitonin receptor-stimulating peptide 1 (125 aa).

Positions 1-25 (MGFWKFPPFLVLSILVLYQAGMFHA) are cleaved as a signal peptide. The propeptide occupies 26 to 77 (APFRSVFDGRFDPATLDEEESRLLLAAMVNDYEQMRTRESEKAQKTEGSRIQ). Cys81 and Cys86 form a disulfide bridge.

The protein belongs to the calcitonin family.

It is found in the secreted. Functionally, stimulates cAMP production via the calcitonin receptor (CT) but not via the CT-like (CL) receptor. The protein is Calcitonin receptor-stimulating peptide 1 (CRSP1) of Ovis aries (Sheep).